An 829-amino-acid chain; its full sequence is MNRRDFMKANAVIAAASAAGLALPAGASNLITSSEQTKLEWNKAPCRFCGTGCSVMVATREGKVVATHGDANSEVNRGLSCIKGYFLSKIMYGRDRLTSPMLRMTDGKYDKHGEFTPVSWEKAFDTMAERWKATIKEKGPTAVGMFGSGQWTVWEGYAAVKLMKAGFGTNNIDPNARHCMASAVAGFMRTFGIDEPMGCYDDMEAADAFVLWGSNMAEMHPILWTRVTDRRLSAPHVKVAVLSTFEHRSFDLADLPMVFHPQTDLAILNFIANYIIQNNKVNWDFVNKHVNFRKGTTDIGYGLRPAHPTQMKSKNAATANDSTPIDFEQFKKFVADYDVESVSKLSGVPEHKLLELAELYADPKVKVTSFWTMGFNQHTRGVWCNNLMYNIHLLVGKISTPGNSPFSLTGQPSACGTAREVGTFSHRLPADMVVTDPKHRKIAENIWKIPSGIIPEKPGYHAVEQSRRLKDGDLNCYWVQVNNNMQAGPNINEEGLPGYRNPANFIVVSDAYPTVTTQAADLILPTAMWVEKEGAYGNAERRTQFWHQMVKAPGESKSDLWQLMEFSKRFTTDEVWSKAVLDANPKYKGKTLFEVLFKNGQVDKFPLADADPKYMNDENDAFGFYVQKGLFEEYATFGRGHGHDLADFDTYHKEHGLRWPVVDGKETKWRFREGSDPYVKAGTGFEFYGKPDGRAVIFALPYEPAAEAPDEEFDMWLSTGRVLEHWHSGSMTQRVPELYKAFPDAVCFMHPDDAKKRGLRRGDEVKVMSRRGEIKTRIETRGRNKPPVGLVFVPWFDASQLINKVTLDATDPISKQTDFKKCAVKVIKA.

A signal peptide (tat-type signal) is located at residues 1–27 (MNRRDFMKANAVIAAASAAGLALPAGA). One can recognise a 4Fe-4S Mo/W bis-MGD-type domain in the interval 39-95 (LEWNKAPCRFCGTGCSVMVATREGKVVATHGDANSEVNRGLSCIKGYFLSKIMYGRD). [4Fe-4S] cluster-binding residues include Cys46, Cys49, Cys53, and Cys81. Residues Lys83, Gln150, Asn175, Cys179, 212–219 (WGSNMAEM), 243–247 (STFEH), 262–264 (QTD), Met373, Gln377, Asn483, 509–510 (SD), Lys532, Asp559, and 719–728 (TGRVLEHWHS) contribute to the Mo-bis(molybdopterin guanine dinucleotide) site. Trp795 serves as a coordination point for substrate. Residues Asn803 and Lys820 each coordinate Mo-bis(molybdopterin guanine dinucleotide).

It belongs to the prokaryotic molybdopterin-containing oxidoreductase family. NasA/NapA/NarB subfamily. In terms of assembly, component of the periplasmic nitrate reductase NapAB complex composed of NapA and NapB. [4Fe-4S] cluster serves as cofactor. Mo-bis(molybdopterin guanine dinucleotide) is required as a cofactor. Predicted to be exported by the Tat system. The position of the signal peptide cleavage has not been experimentally proven.

It is found in the periplasm. It carries out the reaction 2 Fe(II)-[cytochrome] + nitrate + 2 H(+) = 2 Fe(III)-[cytochrome] + nitrite + H2O. Functionally, catalytic subunit of the periplasmic nitrate reductase complex NapAB. Receives electrons from NapB and catalyzes the reduction of nitrate to nitrite. The sequence is that of Periplasmic nitrate reductase from Shewanella denitrificans (strain OS217 / ATCC BAA-1090 / DSM 15013).